Here is a 231-residue protein sequence, read N- to C-terminus: Protein fmp52-2, mitochondrial (231 aa).

The transit peptide at 1–46 directs the protein to the mitochondrion; that stretch reads MTMTTAAVFGCTGAVGSQILATLLAIDTFPSVKTISRRLPNVQSPK.

The protein belongs to the FMP52 family.

Its subcellular location is the mitochondrion outer membrane. The sequence is that of Protein fmp52-2, mitochondrial (fmp522) from Neosartorya fischeri (strain ATCC 1020 / DSM 3700 / CBS 544.65 / FGSC A1164 / JCM 1740 / NRRL 181 / WB 181) (Aspergillus fischerianus).